The following is an 829-amino-acid chain: Cadherin-3 (829 aa).

An N-terminal signal peptide occupies residues 1–24 (MGLPRGPLASLLLLQVCWLQCAAS). Positions 25-107 (EPCRAVFREA…SKRILRRHKR (83 aa)) are excised as a propeptide. Cadherin domains are found at residues 108–215 (DWVV…KPKF), 216–328 (TQDT…APMF), 329–440 (DPQK…APVF), 441–546 (VPPS…DHGP), and 547–650 (VPEP…CPGP). The Extracellular segment spans residues 108-654 (DWVVAPISVP…ETCPGPWKGG (547 aa)). Asparagine 200 is a glycosylation site (N-linked (GlcNAc...) asparagine). Asparagine 566 carries N-linked (GlcNAc...) asparagine glycosylation. A helical transmembrane segment spans residues 655 to 677 (FILPVLGAVLALLFLLLVLLLLV). Residues 678–829 (RKKRKIKEPL…ADMYGGGEDD (152 aa)) lie on the Cytoplasmic side of the membrane.

Interacts with CDCP1 and CTNNB1. As to expression, expressed in some normal epithelial tissues and in some carcinoma cell lines.

It localises to the cell membrane. Cadherins are calcium-dependent cell adhesion proteins. They preferentially interact with themselves in a homophilic manner in connecting cells; cadherins may thus contribute to the sorting of heterogeneous cell types. The chain is Cadherin-3 (CDH3) from Homo sapiens (Human).